A 339-amino-acid polypeptide reads, in one-letter code: Aspartate carbamoyltransferase catalytic subunit (339 aa).

The carbamoyl phosphate site is built by Arg69 and Thr70. Lys97 is an L-aspartate binding site. Residues Arg119, His149, and Gln152 each coordinate carbamoyl phosphate. 2 residues coordinate L-aspartate: Arg182 and Arg237. Residues Gly278 and Pro279 each coordinate carbamoyl phosphate.

It belongs to the aspartate/ornithine carbamoyltransferase superfamily. ATCase family. In terms of assembly, heterododecamer (2C3:3R2) of six catalytic PyrB chains organized as two trimers (C3), and six regulatory PyrI chains organized as three dimers (R2).

It carries out the reaction carbamoyl phosphate + L-aspartate = N-carbamoyl-L-aspartate + phosphate + H(+). The protein operates within pyrimidine metabolism; UMP biosynthesis via de novo pathway; (S)-dihydroorotate from bicarbonate: step 2/3. Catalyzes the condensation of carbamoyl phosphate and aspartate to form carbamoyl aspartate and inorganic phosphate, the committed step in the de novo pyrimidine nucleotide biosynthesis pathway. This chain is Aspartate carbamoyltransferase catalytic subunit, found in Hydrogenovibrio crunogenus (strain DSM 25203 / XCL-2) (Thiomicrospira crunogena).